A 120-amino-acid polypeptide reads, in one-letter code: NAD(P)H-quinone oxidoreductase subunit 3, chloroplastic (120 aa).

The next 3 membrane-spanning stretches (helical) occupy residues 9-29 (IFWA…LISG), 64-84 (MFAL…PWAM), and 88-108 (VLGV…IVGS).

It belongs to the complex I subunit 3 family. As to quaternary structure, NDH is composed of at least 16 different subunits, 5 of which are encoded in the nucleus.

It is found in the plastid. The protein localises to the chloroplast thylakoid membrane. The catalysed reaction is a plastoquinone + NADH + (n+1) H(+)(in) = a plastoquinol + NAD(+) + n H(+)(out). It carries out the reaction a plastoquinone + NADPH + (n+1) H(+)(in) = a plastoquinol + NADP(+) + n H(+)(out). NDH shuttles electrons from NAD(P)H:plastoquinone, via FMN and iron-sulfur (Fe-S) centers, to quinones in the photosynthetic chain and possibly in a chloroplast respiratory chain. The immediate electron acceptor for the enzyme in this species is believed to be plastoquinone. Couples the redox reaction to proton translocation, and thus conserves the redox energy in a proton gradient. This is NAD(P)H-quinone oxidoreductase subunit 3, chloroplastic from Gossypium hirsutum (Upland cotton).